The primary structure comprises 113 residues: Putative pterin-4-alpha-carbinolamine dehydratase (113 aa).

Belongs to the pterin-4-alpha-carbinolamine dehydratase family.

The enzyme catalyses (4aS,6R)-4a-hydroxy-L-erythro-5,6,7,8-tetrahydrobiopterin = (6R)-L-erythro-6,7-dihydrobiopterin + H2O. In Legionella pneumophila (strain Lens), this protein is Putative pterin-4-alpha-carbinolamine dehydratase.